A 290-amino-acid chain; its full sequence is Membrane protein insertase YidC (290 aa).

Positions 1–19 (MKKKTLLPLFLGIMVFLAG) are cleaved as a signal peptide. Residue Cys-20 is the site of N-palmitoyl cysteine attachment. Cys-20 carries S-diacylglycerol cysteine lipidation. A run of 5 helical transmembrane segments spans residues 56–76 (YGLAIIILVLVIRIILLPFML), 134–154 (MLGCLPMLIQLPIIMGLYFVL), 176–196 (PDIWITIIAGVLYFIQAYVSS), 207–224 (GYMMMVISPIMIIWISLS), and 229–251 (LGLYWSVSAAFLVVQTHFANIYY). The segment at 270–290 (HNGGSNKKGKNTQVVSKKKKK) is disordered.

Belongs to the OXA1/ALB3/YidC family. Type 2 subfamily.

It is found in the cell membrane. In terms of biological role, required for the insertion and/or proper folding and/or complex formation of integral membrane proteins into the membrane. Involved in integration of membrane proteins that insert both dependently and independently of the Sec translocase complex, as well as at least some lipoproteins. The chain is Membrane protein insertase YidC from Staphylococcus aureus (strain MRSA252).